A 181-amino-acid polypeptide reads, in one-letter code: Shikimate kinase 2 (181 aa).

Residue 12-17 (GCGKTT) coordinates ATP. Mg(2+)-binding residues include T16 and D32. Substrate contacts are provided by D34, R58, and G79. An LID domain region spans residues 112-126 (EAEPEVGLRPTLTGK). Residue R120 participates in ATP binding. Substrate is bound at residue R139.

The protein belongs to the shikimate kinase family. AroL subfamily. Monomer. Mg(2+) is required as a cofactor.

Its subcellular location is the cytoplasm. It catalyses the reaction shikimate + ATP = 3-phosphoshikimate + ADP + H(+). It functions in the pathway metabolic intermediate biosynthesis; chorismate biosynthesis; chorismate from D-erythrose 4-phosphate and phosphoenolpyruvate: step 5/7. Catalyzes the specific phosphorylation of the 3-hydroxyl group of shikimic acid using ATP as a cosubstrate. This is Shikimate kinase 2 from Escherichia fergusonii (strain ATCC 35469 / DSM 13698 / CCUG 18766 / IAM 14443 / JCM 21226 / LMG 7866 / NBRC 102419 / NCTC 12128 / CDC 0568-73).